Reading from the N-terminus, the 157-residue chain is MNKITINLNLNGEARSIVTEPNKRLLDLLREDFGLTSVKEGCSEGECGACTVIFNGDPVTTCCMLAGQADESTIITLEGVAEDGKPSLLQQCFLEAGAVQCGYCTPGMILTAKALLDKNPDPTDEEITVAMSGNLCRCTGYIKIHAAVRYAVERCAN.

The 77-residue stretch at 4-80 (ITINLNLNGE…ESTIITLEGV (77 aa)) folds into the 2Fe-2S ferredoxin-type domain. The [2Fe-2S] cluster site is built by cysteine 42, cysteine 47, cysteine 50, cysteine 62, cysteine 101, cysteine 104, cysteine 136, and cysteine 138.

As to quaternary structure, heterooctamer of NDHM, NDHL, NDHS and NDHF. Dimer of heterotetramers. [2Fe-2S] cluster serves as cofactor.

It carries out the reaction nicotinate + NADP(+) + H2O = 6-hydroxynicotinate + NADPH + H(+). Its pathway is cofactor degradation; nicotinate degradation; 6-hydroxynicotinate from nicotinate: step 1/1. Reversibly inactivated by selenide and sulfide. Not inhibited by cyanide. In terms of biological role, catalyzes the hydroxylation of nicotinate to 6-hydroxynicotinate. Also active against 2-pyrazinecarboxylic acid, but inactive against other nicotinate analogs. In Eubacterium barkeri (Clostridium barkeri), this protein is Nicotinate dehydrogenase small FeS subunit (ndhS).